We begin with the raw amino-acid sequence, 694 residues long: Elongation factor G (694 aa).

In terms of domain architecture, tr-type G spans 8 to 283 (ERYRNIGIMA…AVIDYLPAPV (276 aa)). GTP is bound by residues 17-24 (AHIDAGKT), 81-85 (DTPGH), and 135-138 (NKMD).

This sequence belongs to the TRAFAC class translation factor GTPase superfamily. Classic translation factor GTPase family. EF-G/EF-2 subfamily.

Its subcellular location is the cytoplasm. In terms of biological role, catalyzes the GTP-dependent ribosomal translocation step during translation elongation. During this step, the ribosome changes from the pre-translocational (PRE) to the post-translocational (POST) state as the newly formed A-site-bound peptidyl-tRNA and P-site-bound deacylated tRNA move to the P and E sites, respectively. Catalyzes the coordinated movement of the two tRNA molecules, the mRNA and conformational changes in the ribosome. This is Elongation factor G from Paramagnetospirillum magneticum (strain ATCC 700264 / AMB-1) (Magnetospirillum magneticum).